The sequence spans 869 residues: Dynamin-3 (869 aa).

In terms of domain architecture, Dynamin-type G spans 28-294; it reads LLELPQIAVV…LTNHIRDTLP (267 aa). The segment at 38–45 is G1 motif; that stretch reads GGQSAGKS. Residue 38–46 coordinates GTP; sequence GGQSAGKSS. Positions 64-66 are G2 motif; sequence VTR. Residues 136–139 form a G3 motif region; it reads DLPG. The tract at residues 205–208 is G4 motif; that stretch reads TKLD. A GTP-binding site is contributed by 205–211; the sequence is TKLDLMD. Y231 bears the Phosphotyrosine mark. The G5 motif stretch occupies residues 235-238; the sequence is VNRS. 236–239 is a GTP binding site; it reads NRSQ. Residue K299 is modified to N6-acetyllysine. A PH domain is found at 515–621; it reads QGTNLPPSRQ…ACDSQEDVDS (107 aa). Y603 is modified (phosphotyrosine). K604 bears the N6-acetyllysine mark. Positions 659-750 constitute a GED domain; sequence VETIRNLVDS…IIGDISTATV (92 aa). The tract at residues 747–869 is disordered; that stretch reads TATVSTPAPP…IRPLESSLLD (123 aa). A phosphoserine mark is found at S769 and S773. Pro residues-rich tracts occupy residues 797 to 822 and 832 to 855; these read PAIP…PPFP and PQVP…PSPT. A Phosphoserine modification is found at S853.

The protein belongs to the TRAFAC class dynamin-like GTPase superfamily. Dynamin/Fzo/YdjA family.

The protein resides in the cytoplasm. Its subcellular location is the cytoskeleton. The catalysed reaction is GTP + H2O = GDP + phosphate + H(+). Its function is as follows. Microtubule-associated force-producing protein involved in producing microtubule bundles and able to bind and hydrolyze GTP. Most probably involved in vesicular trafficking processes, in particular endocytosis. The protein is Dynamin-3 (DNM3) of Homo sapiens (Human).